The chain runs to 425 residues: Dihydroorotase (425 aa).

Residues His56 and His58 each contribute to the Zn(2+) site. Substrate-binding positions include 58-60 (HYR) and Asn90. 3 residues coordinate Zn(2+): Asp148, His175, and His228. Position 274 (Asn274) interacts with substrate. Asp301 contacts Zn(2+). Asp301 is an active-site residue. Residues His305 and 319–320 (FG) each bind substrate.

This sequence belongs to the metallo-dependent hydrolases superfamily. DHOase family. Class I DHOase subfamily. It depends on Zn(2+) as a cofactor.

It catalyses the reaction (S)-dihydroorotate + H2O = N-carbamoyl-L-aspartate + H(+). Its pathway is pyrimidine metabolism; UMP biosynthesis via de novo pathway; (S)-dihydroorotate from bicarbonate: step 3/3. In terms of biological role, catalyzes the reversible cyclization of carbamoyl aspartate to dihydroorotate. The protein is Dihydroorotase of Lactobacillus delbrueckii subsp. bulgaricus (strain ATCC BAA-365 / Lb-18).